A 501-amino-acid polypeptide reads, in one-letter code: Acyl-CoA-binding domain-containing protein 5A (501 aa).

The ACB domain maps to 9–98 (YEQRFNAAVK…LKLILESMPV (90 aa)). Residues 20-29 (IQNLPPNGSF), 40-44 (YSYYK), K66, and Y85 each bind an acyl-CoA. Residues 173–405 (IDLEDREDDD…GERWGADGPM (233 aa)) are disordered. Residues 176–195 (EDREDDDDEDEEGERDEVEE) show a composition bias toward acidic residues. Positions 219-235 (SNGSISQHKGLSNGTHG) are enriched in polar residues. 3 stretches are compositionally biased toward basic and acidic residues: residues 236–254 (SKSDLNRQESEENTEHMNH), 266–283 (NSEKDKEEDVSSSHHVAS), and 328–366 (RSQDDELLGREEGVQHGGEDGRGSRGGAQRRELPVKRSD). Residues 376–389 (SRSPASGSGSAGPQ) show a composition bias toward low complexity. Residues 406–437 (TENLNEQIICALARLQDDMQSVLQRLHTLEAL) adopt a coiled-coil conformation. A helical membrane pass occupies residues 465–485 (WWPFDVSLGTVAFAVVWPFVV).

This sequence belongs to the ATG37 family.

Its subcellular location is the membrane. Its function is as follows. Acyl-CoA binding protein which acts as the peroxisome receptor for pexophagy but is dispensable for aggrephagy and nonselective autophagy. Binds medium- and long-chain acyl-CoA esters. The sequence is that of Acyl-CoA-binding domain-containing protein 5A (acbd5a) from Danio rerio (Zebrafish).